A 405-amino-acid chain; its full sequence is Phosphoglycerate kinase (405 aa).

Residues 21-23 (DFN), R38, 59-62 (HQSR), R116, and R156 contribute to the substrate site. ATP is bound by residues E330 and 355-358 (GGHT).

Belongs to the phosphoglycerate kinase family. As to quaternary structure, monomer.

It localises to the cytoplasm. The enzyme catalyses (2R)-3-phosphoglycerate + ATP = (2R)-3-phospho-glyceroyl phosphate + ADP. Its pathway is carbohydrate degradation; glycolysis; pyruvate from D-glyceraldehyde 3-phosphate: step 2/5. The protein is Phosphoglycerate kinase of Methanocorpusculum labreanum (strain ATCC 43576 / DSM 4855 / Z).